We begin with the raw amino-acid sequence, 382 residues long: Beta-lactamase CMY-10 (382 aa).

The N-terminal stretch at 1 to 23 (MQQRQSILWGAVATLMWAGLAHA) is a signal peptide. Ser-88 serves as the catalytic Acyl-ester intermediate. AMP is bound at residue Ser-88. The GMP site is built by Ser-88, Gln-144, Tyr-174, Thr-336, Ser-338, and Asn-363. IMP-binding residues include Ser-88, Gln-144, Tyr-174, Thr-336, Ser-338, and Asn-363. AMP is bound at residue Tyr-174. Residue Ser-338 participates in AMP binding.

This sequence belongs to the class-C beta-lactamase family. In terms of assembly, monomer.

The catalysed reaction is a beta-lactam + H2O = a substituted beta-amino acid. Inhibited by various nucleotides in vitro, including adenosine 5'-(P-acetyl)monophosphate (acAMP), inosine-5'-monophosphate (IMP) and guanosine-5'-monophosphate (GMP); IMP and GMP exhibit strongest competitive inhibition. Inhibited by the beta-lactamase-blocking agent, avibactam. Inhibited by clavulanic acid. Weakly inhibited by citric acid. Functionally, class C beta-lactamase which confers resistance to penicillins and cephalosporins. Has benzylpenicillin-, ceftazidime-, nitrocefin- and imipenem-hydrolyzing activity. The protein is Beta-lactamase CMY-10 of Klebsiella aerogenes (Enterobacter aerogenes).